The chain runs to 213 residues: Octanoyltransferase (213 aa).

The 176-residue stretch at 28 to 203 (GTSPETLLLL…RFPFLLDERL (176 aa)) folds into the BPL/LPL catalytic domain. Residues 66–73 (RGGDVTFH), 133–135 (SIG), and 146–148 (GFA) each bind substrate. Residue cysteine 164 is the Acyl-thioester intermediate of the active site.

It belongs to the LipB family.

The protein resides in the cytoplasm. It carries out the reaction octanoyl-[ACP] + L-lysyl-[protein] = N(6)-octanoyl-L-lysyl-[protein] + holo-[ACP] + H(+). It functions in the pathway protein modification; protein lipoylation via endogenous pathway; protein N(6)-(lipoyl)lysine from octanoyl-[acyl-carrier-protein]: step 1/2. In terms of biological role, catalyzes the transfer of endogenously produced octanoic acid from octanoyl-acyl-carrier-protein onto the lipoyl domains of lipoate-dependent enzymes. Lipoyl-ACP can also act as a substrate although octanoyl-ACP is likely to be the physiological substrate. This is Octanoyltransferase from Geobacter metallireducens (strain ATCC 53774 / DSM 7210 / GS-15).